Reading from the N-terminus, the 156-residue chain is Small ribosomal subunit protein uS7c (156 aa).

Belongs to the universal ribosomal protein uS7 family. Part of the 30S ribosomal subunit.

It is found in the plastid. The protein localises to the chloroplast. One of the primary rRNA binding proteins, it binds directly to 16S rRNA where it nucleates assembly of the head domain of the 30S subunit. This chain is Small ribosomal subunit protein uS7c (rps7), found in Gracilaria tenuistipitata var. liui (Red alga).